The chain runs to 414 residues: Esterase FrsA (414 aa).

This sequence belongs to the FrsA family.

It catalyses the reaction a carboxylic ester + H2O = an alcohol + a carboxylate + H(+). Catalyzes the hydrolysis of esters. This Escherichia coli O17:K52:H18 (strain UMN026 / ExPEC) protein is Esterase FrsA.